The sequence spans 102 residues: N(4)-acetylcytidine amidohydrolase (102 aa).

The ASCH domain occupies 6-93; sequence TFFSRFEQDI…IKEIYPGLDE (88 aa). K20 functions as the Proton acceptor in the catalytic mechanism. The active-site Nucleophile is the T23. E73 functions as the Proton donor in the catalytic mechanism.

The protein belongs to the N(4)-acetylcytidine amidohydrolase family.

The enzyme catalyses N(4)-acetylcytidine + H2O = cytidine + acetate + H(+). It catalyses the reaction N(4)-acetyl-2'-deoxycytidine + H2O = 2'-deoxycytidine + acetate + H(+). The catalysed reaction is N(4)-acetylcytosine + H2O = cytosine + acetate + H(+). Functionally, catalyzes the hydrolysis of N(4)-acetylcytidine (ac4C). The chain is N(4)-acetylcytidine amidohydrolase from Serratia proteamaculans (strain 568).